Reading from the N-terminus, the 530-residue chain is MTDHPRRVTRALLSVSDKTGLIEFAKALAAHDVELVSTGGTAKAIAAAGLKVKDVSELTGFPEMMDGRVKTLHPKVHGGLLAIRDNKDHADAMKAHGIAPIDLLVVNLYPFEATVDKGAGFEDCIENIDIGGPAMIRAAAKNHDDVAVVVEAEDYKAVLDELAANKGATTLKLRRRLAAKAYARTAAYDAAISNWFNRQLEIDAPDFRAFGGKLIQSLRYGENPHQTAAFYATPDKRPGVSTARQLQGKELSYNNINDTDAAYECIGEFDAKRTAACVIVKHANPCGVAEGSDLVSAYRKALACDSTSAFGGIIAMNRALDADTAREITKIFTEVIIAPDASEEAIAIIGARKNLRLLLAGSLPDPRAPGLTAKTVAGGLLVQSRDNAVVDDMTFKVVTKRAPTDAEMRDLKFAFRVAKHVKSNTIIYAKDLATVGIGAGQMSRVDSARIAARKAQDAAVELKLAEPLTKGSVVASDAFFPFADGMLACIEAGATAVVQPGGSMRDDEVIKAADEHGIAMVFTGTRHFRH.

Residues 2-150 (TDHPRRVTRA…KNHDDVAVVV (149 aa)) enclose the MGS-like domain.

This sequence belongs to the PurH family.

The catalysed reaction is (6R)-10-formyltetrahydrofolate + 5-amino-1-(5-phospho-beta-D-ribosyl)imidazole-4-carboxamide = 5-formamido-1-(5-phospho-D-ribosyl)imidazole-4-carboxamide + (6S)-5,6,7,8-tetrahydrofolate. It carries out the reaction IMP + H2O = 5-formamido-1-(5-phospho-D-ribosyl)imidazole-4-carboxamide. It participates in purine metabolism; IMP biosynthesis via de novo pathway; 5-formamido-1-(5-phospho-D-ribosyl)imidazole-4-carboxamide from 5-amino-1-(5-phospho-D-ribosyl)imidazole-4-carboxamide (10-formyl THF route): step 1/1. The protein operates within purine metabolism; IMP biosynthesis via de novo pathway; IMP from 5-formamido-1-(5-phospho-D-ribosyl)imidazole-4-carboxamide: step 1/1. The polypeptide is Bifunctional purine biosynthesis protein PurH (Bradyrhizobium diazoefficiens (strain JCM 10833 / BCRC 13528 / IAM 13628 / NBRC 14792 / USDA 110)).